The chain runs to 434 residues: Chaperone SurA (434 aa).

A signal peptide spans 1–29; the sequence is MKTLRLNFRSAILKALGALLLLQGCLAHA. 2 PpiC domains span residues 180–281 and 290–389; these read AEEY…AMLE and VEQS…QVQD.

It localises to the periplasm. It catalyses the reaction [protein]-peptidylproline (omega=180) = [protein]-peptidylproline (omega=0). Chaperone involved in the correct folding and assembly of outer membrane proteins. Recognizes specific patterns of aromatic residues and the orientation of their side chains, which are found more frequently in integral outer membrane proteins. May act in both early periplasmic and late outer membrane-associated steps of protein maturation. The protein is Chaperone SurA of Hahella chejuensis (strain KCTC 2396).